A 144-amino-acid polypeptide reads, in one-letter code: Monooxygenase ptaG (144 aa).

Belongs to the avfA family.

It functions in the pathway secondary metabolite biosynthesis. In terms of biological role, monooxygenase; part of the gene cluster that mediates the biosynthesis of pestheic acid, a diphenyl ether which is a biosynthetic precursor of the unique chloropupukeananes. The biosynthesis initiates from condensation of acetate and malonate units catalyzed by the non-reducing PKS ptaA. As the ptaA protein is TE/CLC domain-deficient, hydrolysis and Claisen cyclization of the polyketide could be catalyzed by ptaB containing a beta-lactamase domain. The ptaB protein might hydrolyze the thioester bond between the ACP of ptaA and the intermediate to release atrochrysone carboxylic acid, which is spontaneously dehydrated to form endocrocin anthrone. Endocrocin anthrone is then converted to endocrocin, catalyzed by the anthrone oxygenase ptaC. Spontaneous decarboxylation of endocrocin occurs to generate emodin. An O-methyltransferase (ptaH or ptaI) could methylate emodin to form physcion. PtaJ could then catalyze the oxidative cleavage of physcion, and rotation of the intermediate could then afford desmethylisosulochrin. PtaF, a putative NADH-dependent oxidoreductase, might also participate in the oxidative cleavage step. Desmethylisosulochrin is then transformed by another O-methyltransferase (ptaH or ptaI) to form isosulochrin. Chlorination of isosulochrin by ptaM in the cyclohexadienone B ring then produces chloroisosulochrin. PtaE is responsible for the oxidative coupling reactions of both benzophenones isosulochrin and chloroisosulochrin to RES-1214-1 and pestheic acid respectively, regardless of chlorination. This Pestalotiopsis fici (strain W106-1 / CGMCC3.15140) protein is Monooxygenase ptaG.